The following is a 219-amino-acid chain: Probable glutathione S-transferase GSTF1 (219 aa).

The GST N-terminal domain occupies 2–83; the sequence is TPVKVFGPAQ…YILRKYKTRE (82 aa). Residues Ser-12, 41 to 42, 54 to 55, and 67 to 68 contribute to the glutathione site; these read HK, QI, and ES. One can recognise a GST C-terminal domain in the interval 91–219; it reads NLREAAMVDV…LAAVMAPQGA (129 aa).

Belongs to the GST superfamily. Phi family. As to expression, constitutively expressed in roots.

The catalysed reaction is RX + glutathione = an S-substituted glutathione + a halide anion + H(+). Conjugation of reduced glutathione to a wide number of exogenous and endogenous hydrophobic electrophiles. The polypeptide is Probable glutathione S-transferase GSTF1 (GSTF1) (Oryza sativa subsp. japonica (Rice)).